The primary structure comprises 153 residues: SKP1-like protein 5 (153 aa).

The interaction with the F-box domain of F-box proteins stretch occupies residues 90–153 (MMAANYLNIQ…IREENQWAFQ (64 aa)).

The protein belongs to the SKP1 family. As to quaternary structure, part of a SCF (SKP1-cullin-F-box) protein ligase complex. Interacts with PP2A13. As to expression, restricted to inflorescences, especially in the inflorescence meristem (IM).

The protein resides in the nucleus. The protein operates within protein modification; protein ubiquitination. In terms of biological role, involved in ubiquitination and subsequent proteasomal degradation of target proteins. Together with CUL1, RBX1 and a F-box protein, it forms a SCF E3 ubiquitin ligase complex. The functional specificity of this complex depends on the type of F-box protein. In the SCF complex, it serves as an adapter that links the F-box protein to CUL1. This is SKP1-like protein 5 (ASK5) from Arabidopsis thaliana (Mouse-ear cress).